We begin with the raw amino-acid sequence, 419 residues long: Hyaluronan synthase (419 aa).

5 helical membrane-spanning segments follow: residues 8-28 (LIVL…MYLF), 33-53 (VGIY…LSFL), 318-338 (IVAL…VAIG), 345-365 (AIQL…IVAL), and 376-396 (PASF…LQPL).

The protein belongs to the NodC/HAS family. Requires Mg(2+) as cofactor.

It is found in the cell membrane. It carries out the reaction [hyaluronan](n) + UDP-N-acetyl-alpha-D-glucosamine = N-acetyl-beta-D-glucosaminyl-(1-&gt;4)-[hyaluronan](n) + UDP + H(+). The catalysed reaction is N-acetyl-beta-D-glucosaminyl-(1-&gt;4)-[hyaluronan](n) + UDP-alpha-D-glucuronate = [hyaluronan](n+1) + UDP + H(+). Its pathway is glycan biosynthesis; hyaluronan biosynthesis. Glycosaminoglycan synthesis. The hyaluronic acid capsule is involved in the pathogenicity of group A Streptococci; it may be the major virulence determinant. The protein is Hyaluronan synthase (hasA) of Streptococcus pyogenes serotype M6 (strain ATCC BAA-946 / MGAS10394).